Here is a 307-residue protein sequence, read N- to C-terminus: ATP synthase gamma chain (307 aa).

This sequence belongs to the ATPase gamma chain family. F-type ATPases have 2 components, CF(1) - the catalytic core - and CF(0) - the membrane proton channel. CF(1) has five subunits: alpha(3), beta(3), gamma(1), delta(1), epsilon(1). CF(0) has three main subunits: a, b and c.

It is found in the cell membrane. In terms of biological role, produces ATP from ADP in the presence of a proton gradient across the membrane. The gamma chain is believed to be important in regulating ATPase activity and the flow of protons through the CF(0) complex. The protein is ATP synthase gamma chain of Bifidobacterium longum subsp. infantis (strain ATCC 15697 / DSM 20088 / JCM 1222 / NCTC 11817 / S12).